The following is a 153-amino-acid chain: SsrA-binding protein (153 aa).

The protein belongs to the SmpB family.

The protein resides in the cytoplasm. Its function is as follows. Required for rescue of stalled ribosomes mediated by trans-translation. Binds to transfer-messenger RNA (tmRNA), required for stable association of tmRNA with ribosomes. tmRNA and SmpB together mimic tRNA shape, replacing the anticodon stem-loop with SmpB. tmRNA is encoded by the ssrA gene; the 2 termini fold to resemble tRNA(Ala) and it encodes a 'tag peptide', a short internal open reading frame. During trans-translation Ala-aminoacylated tmRNA acts like a tRNA, entering the A-site of stalled ribosomes, displacing the stalled mRNA. The ribosome then switches to translate the ORF on the tmRNA; the nascent peptide is terminated with the 'tag peptide' encoded by the tmRNA and targeted for degradation. The ribosome is freed to recommence translation, which seems to be the essential function of trans-translation. This chain is SsrA-binding protein, found in Sulfurovum sp. (strain NBC37-1).